We begin with the raw amino-acid sequence, 77 residues long: Rhodotorucin-A peptides type 2 (77 aa).

The propeptide occupies 1 to 3; it reads MVA. C14 carries the S-farnesyl cysteine lipid modification. Positions 15-18 are excised as a propeptide; it reads TVAK. C29 carries S-farnesyl cysteine lipidation. A propeptide spanning residues 30–33 is cleaved from the precursor; sequence TVSK. Residue C44 is the site of S-farnesyl cysteine attachment. Positions 45–48 are excised as a propeptide; that stretch reads TVSK. A lipid anchor (S-farnesyl cysteine) is attached at C59. The propeptide occupies 60–63; sequence TVSK. C74 carries the S-farnesyl cysteine lipid modification. A propeptide spanning residues 75–77 is cleaved from the precursor; sequence TVA.

The protein resides in the cell membrane. Its function is as follows. Rhodotorucin-A is a mating pheromone in cells of mating type A of Rhodosporidium toruloides. This Rhodotorula toruloides (Yeast) protein is Rhodotorucin-A peptides type 2 (RHA2).